The following is a 101-amino-acid chain: NAD(P)H-quinone oxidoreductase subunit 4L, chloroplastic (101 aa).

The next 3 helical transmembrane spans lie at 2–22 (ILEHVLVLSAYLFFIGLYGLI), 32–52 (MCLELILNAVNMNFVTFSDFF), and 61–81 (IFCIFVIAIAAAEAAIGLAIV).

Belongs to the complex I subunit 4L family. In terms of assembly, NDH is composed of at least 16 different subunits, 5 of which are encoded in the nucleus.

It localises to the plastid. It is found in the chloroplast thylakoid membrane. It catalyses the reaction a plastoquinone + NADH + (n+1) H(+)(in) = a plastoquinol + NAD(+) + n H(+)(out). The enzyme catalyses a plastoquinone + NADPH + (n+1) H(+)(in) = a plastoquinol + NADP(+) + n H(+)(out). In terms of biological role, NDH shuttles electrons from NAD(P)H:plastoquinone, via FMN and iron-sulfur (Fe-S) centers, to quinones in the photosynthetic chain and possibly in a chloroplast respiratory chain. The immediate electron acceptor for the enzyme in this species is believed to be plastoquinone. Couples the redox reaction to proton translocation, and thus conserves the redox energy in a proton gradient. The polypeptide is NAD(P)H-quinone oxidoreductase subunit 4L, chloroplastic (Aethionema cordifolium (Lebanon stonecress)).